Consider the following 262-residue polypeptide: Global transcriptional regulator CodY (262 aa).

Residues 1 to 159 (MAHLLEKTRK…ASTVVGIQLL (159 aa)) are GAF domain. A DNA-binding region (H-T-H motif) is located at residues 207–226 (ASVIADRIGITRSVIVNALR).

Belongs to the CodY family.

It is found in the cytoplasm. In terms of biological role, DNA-binding global transcriptional regulator which is involved in the adaptive response to starvation and acts by directly or indirectly controlling the expression of numerous genes in response to nutrient availability. During rapid exponential growth, CodY is highly active and represses genes whose products allow adaptation to nutrient depletion. The polypeptide is Global transcriptional regulator CodY (Streptococcus pneumoniae serotype 4 (strain ATCC BAA-334 / TIGR4)).